The following is a 281-amino-acid chain: Cell division protein DivIB (281 aa).

A disordered region spans residues 1–36 (MARKRITRRDPEEELSKFLRHEPGQGQETRKLSSQL). Topologically, residues 1–46 (MARKRITRRDPEEELSKFLRHEPGQGQETRKLSSQLTSLKKERRRG) are cytoplasmic. The span at 8-31 (RRDPEEELSKFLRHEPGQGQETRK) shows a compositional bias: basic and acidic residues. The helical transmembrane segment at 47-69 (LLTRLGSIMAVCLLAIAFLTYYV) threads the bilayer. Residues 70 to 281 (SPLADVSTVR…SAEKKAYGLS (212 aa)) lie on the Extracellular side of the membrane. In terms of domain architecture, POTRA spans 73–144 (ADVSTVRVLG…NTLNMQVHER (72 aa)).

The protein belongs to the FtsQ/DivIB family. DivIB subfamily.

It localises to the cell membrane. Functionally, cell division protein that may be involved in stabilizing or promoting the assembly of the division complex. The chain is Cell division protein DivIB from Lactobacillus delbrueckii subsp. bulgaricus (strain ATCC 11842 / DSM 20081 / BCRC 10696 / JCM 1002 / NBRC 13953 / NCIMB 11778 / NCTC 12712 / WDCM 00102 / Lb 14).